The chain runs to 457 residues: RuvB-like helicase 1 (457 aa).

Residue 72–79 coordinates ATP; that stretch reads GAPGTGKT.

This sequence belongs to the RuvB family. As to quaternary structure, may form heterododecamers with RVB2. Component of the SWR1 chromatin remodeling complex, the INO80 chromatin remodeling complex, and of the R2TP complex.

Its subcellular location is the nucleus. The catalysed reaction is ATP + H2O = ADP + phosphate + H(+). DNA helicase which participates in several chromatin remodeling complexes, including the SWR1 and the INO80 complexes. The SWR1 complex mediates the ATP-dependent exchange of histone H2A for the H2A variant HZT1 leading to transcriptional regulation of selected genes by chromatin remodeling. The INO80 complex remodels chromatin by shifting nucleosomes and is involved in DNA repair. Also involved in pre-rRNA processing. This is RuvB-like helicase 1 (RBV1) from Debaryomyces hansenii (strain ATCC 36239 / CBS 767 / BCRC 21394 / JCM 1990 / NBRC 0083 / IGC 2968) (Yeast).